We begin with the raw amino-acid sequence, 254 residues long: GTP cyclohydrolase 1 type 2 homolog (254 aa).

A divalent metal cation contacts are provided by His68, His69, Asp106, His222, and Glu226.

It belongs to the GTP cyclohydrolase I type 2/NIF3 family. In terms of assembly, homohexamer.

The chain is GTP cyclohydrolase 1 type 2 homolog from Allochromatium vinosum (strain ATCC 17899 / DSM 180 / NBRC 103801 / NCIMB 10441 / D) (Chromatium vinosum).